A 464-amino-acid chain; its full sequence is Serine--tRNA synthetase-like protein Slimp (464 aa).

Belongs to the class-II aminoacyl-tRNA synthetase family. Type-1 seryl-tRNA synthetase subfamily.

It localises to the mitochondrion. Its function is as follows. Essential protein which may play a role in mitochondrial morphogenesis and function. Has transfer RNA (tRNA)-binding activity and can bind tRNA(Ser) but does not have serine--tRNA ligase activity and does not bind ATP. The chain is Serine--tRNA synthetase-like protein Slimp from Drosophila melanogaster (Fruit fly).